The sequence spans 215 residues: MAKSASNQLRVTVRTETGKGASRRARRAGKIPAVLYGHGAEPQHLELPGHDYAAVLRHSGTNAVLTLDIAGKEQLALTKALHIHPIRRTIQHADLLVVRRGEKVVVEVSVVVEGQAGPDTLVTQETNSIEIEAEALSIPEQLTVSIEGAEPGTQLTAGQIALPAGVSLISDPDLLVVNVVKAPTAEELEGEVAGAEEAEEAAVEAGEAEAAGESE.

The span at 1–10 (MAKSASNQLR) shows a compositional bias: polar residues. Disordered stretches follow at residues 1–25 (MAKS…SRRA) and 187–215 (ELEG…GESE).

It belongs to the bacterial ribosomal protein bL25 family. CTC subfamily. In terms of assembly, part of the 50S ribosomal subunit; part of the 5S rRNA/L5/L18/L25 subcomplex. Contacts the 5S rRNA. Binds to the 5S rRNA independently of L5 and L18.

Its function is as follows. This is one of the proteins that binds to the 5S RNA in the ribosome where it forms part of the central protuberance. This Mycobacterium bovis (strain ATCC BAA-935 / AF2122/97) protein is Large ribosomal subunit protein bL25.